We begin with the raw amino-acid sequence, 30 residues long: Trypsin inhibitor 1 (30 aa).

Intrachain disulfides connect Cys4/Cys21, Cys11/Cys23, and Cys17/Cys29.

This sequence belongs to the protease inhibitor I7 (squash-type serine protease inhibitor) family.

It is found in the secreted. In terms of biological role, inhibits trypsin. This is Trypsin inhibitor 1 from Momordica charantia (Bitter gourd).